The primary structure comprises 302 residues: Large ribosomal subunit protein uL18 (302 aa).

Belongs to the universal ribosomal protein uL18 family. Component of the large ribosomal subunit (LSU).

The protein resides in the cytoplasm. It localises to the nucleus. Its function is as follows. Component of the ribosome, a large ribonucleoprotein complex responsible for the synthesis of proteins in the cell. The small ribosomal subunit (SSU) binds messenger RNAs (mRNAs) and translates the encoded message by selecting cognate aminoacyl-transfer RNA (tRNA) molecules. The large subunit (LSU) contains the ribosomal catalytic site termed the peptidyl transferase center (PTC), which catalyzes the formation of peptide bonds, thereby polymerizing the amino acids delivered by tRNAs into a polypeptide chain. The nascent polypeptides leave the ribosome through a tunnel in the LSU and interact with protein factors that function in enzymatic processing, targeting, and the membrane insertion of nascent chains at the exit of the ribosomal tunnel. The protein is Large ribosomal subunit protein uL18 (RPL5) of Cucumis sativus (Cucumber).